The following is a 115-amino-acid chain: NADH-ubiquinone oxidoreductase chain 3 (115 aa).

3 helical membrane passes run 4–24 (LTVLSVNIALSTCLITIAFWL), 55–75 (FFLVAITFLLFDLEIALLLPL), and 87–107 (MMLTAFILVSVLALGLAYEWM).

The protein belongs to the complex I subunit 3 family. In terms of assembly, core subunit of respiratory chain NADH dehydrogenase (Complex I) which is composed of 45 different subunits. Interacts with TMEM186. Interacts with TMEM242.

It localises to the mitochondrion inner membrane. It carries out the reaction a ubiquinone + NADH + 5 H(+)(in) = a ubiquinol + NAD(+) + 4 H(+)(out). Functionally, core subunit of the mitochondrial membrane respiratory chain NADH dehydrogenase (Complex I) which catalyzes electron transfer from NADH through the respiratory chain, using ubiquinone as an electron acceptor. Essential for the catalytic activity of complex I. In Peromyscus slevini (Slevin's mouse), this protein is NADH-ubiquinone oxidoreductase chain 3.